The primary structure comprises 422 residues: Probable metallocarboxypeptidase A (422 aa).

A signal peptide spans 1 to 17; the sequence is MRSVLSLALLAVNVVTA. A propeptide spans 18-112 (activation peptide); sequence AVVAPFDYSG…FEAYSAGYAP (95 aa). The Peptidase M14 domain occupies 119-419; it reads SYHSYQDHLS…AGTVAMLKAV (301 aa). 2 residues coordinate Zn(2+): H179 and E182. Residues 179-182, R237, and 254-255 contribute to the substrate site; these read HARE and NR. A disulfide bridge connects residues C248 and C271. Position 309 (H309) interacts with Zn(2+). 310 to 311 is a substrate binding site; that stretch reads SY. E385 functions as the Proton donor/acceptor in the catalytic mechanism.

Belongs to the peptidase M14 family. The cofactor is Zn(2+).

The protein localises to the secreted. In terms of biological role, extracellular metalloprotease that contributes to pathogenicity. The chain is Probable metallocarboxypeptidase A (MCPA) from Trichophyton verrucosum (strain HKI 0517).